A 628-amino-acid polypeptide reads, in one-letter code: Exonuclease V, mitochondrial (628 aa).

Residues 1-21 (MSRFWHFKKFYFTSCYSMQRM) constitute a mitochondrion transit peptide. Residues 37 to 58 (TSEHEQVQSISKEESRSLSSND) are disordered. Basic and acidic residues predominate over residues 38–52 (SEHEQVQSISKEESR). Residues cysteine 164, cysteine 586, cysteine 589, and cysteine 595 each coordinate [4Fe-4S] cluster.

This sequence belongs to the EXO5 family. Monomer. Mg(2+) serves as cofactor. Requires [4Fe-4S] cluster as cofactor.

The protein localises to the mitochondrion. Single strand DNA specific 5' exonuclease involved in mitochondrial DNA replication and recombination. Releases dinucleotides as main products of catalysis. Has the capacity to slide across 5'double-stranded DNA or 5'RNA sequences and resumes cutting two nucleotides downstream of the double-stranded-to-single-stranded junction or RNA-to-DNA junction, respectively. This chain is Exonuclease V, mitochondrial (DEM1), found in Candida albicans (strain SC5314 / ATCC MYA-2876) (Yeast).